The chain runs to 597 residues: Gamma-terpinene synthase, chloroplastic (597 aa).

Residues 1–47 constitute a chloroplast transit peptide; the sequence is MATLSMQVSILSKQVKNLNSFGMRASKLPMVARRVDVSTTRLRPICS. Mn(2+)-binding residues include aspartate 350 and aspartate 354. The DDXXD motif signature appears at 350–354; it reads DDVYD. Homodimerization regions lie at residues 356 to 362 and 428 to 465; these read YGTLDEL and EAKW…FTLP. Aspartate 494 and glutamate 502 together coordinate Mn(2+).

The protein belongs to the terpene synthase family. In terms of assembly, homodimer. The cofactor is Mn(2+). Mg(2+) serves as cofactor.

The protein resides in the plastid. It localises to the chloroplast. The catalysed reaction is (2E)-geranyl diphosphate = gamma-terpinene + diphosphate. It participates in secondary metabolite biosynthesis; terpenoid biosynthesis. In terms of biological role, involved in the biosynthesis of phenolic monoterpenes natural products thymol and carvacrol which have a broad range of biological activities acting as antimicrobial compounds, insecticides, antioxidants and pharmaceutical agents. Monoterpene synthase which catalyzes the conversion of geranyl diphosphate (GPP) to gamma-terpinene and minor amounts of other monoterpenes (e.g. alpha-thujene, alpha-terpinene, myrcene, sabinene, (+)-R-limonene, alpha-pinene and alpha-phellandrene). In Thymus caespititius (Cretan thyme), this protein is Gamma-terpinene synthase, chloroplastic.